A 70-amino-acid polypeptide reads, in one-letter code: Large ribosomal subunit protein bL31 (70 aa).

Cys-16, Cys-18, Cys-37, and Cys-40 together coordinate Zn(2+).

Belongs to the bacterial ribosomal protein bL31 family. Type A subfamily. As to quaternary structure, part of the 50S ribosomal subunit. It depends on Zn(2+) as a cofactor.

Binds the 23S rRNA. In Shewanella woodyi (strain ATCC 51908 / MS32), this protein is Large ribosomal subunit protein bL31.